The sequence spans 396 residues: L-lactate dehydrogenase (396 aa).

The FMN hydroxy acid dehydrogenase domain maps to 1-380; that stretch reads MIISAASDYR…SQDSLVQELD (380 aa). Position 24 (Tyr24) interacts with substrate. FMN is bound by residues Ser106 and Gln127. Tyr129 contributes to the substrate binding site. Thr155 is an FMN binding site. Arg164 lines the substrate pocket. Lys251 is an FMN binding site. The Proton acceptor role is filled by His275. Arg278 is a binding site for substrate. 306-330 contacts FMN; the sequence is DSGIRNGLDVVRMIALGADTVLLGR.

The protein belongs to the FMN-dependent alpha-hydroxy acid dehydrogenase family. Requires FMN as cofactor.

Its subcellular location is the cell inner membrane. It catalyses the reaction (S)-lactate + A = pyruvate + AH2. In terms of biological role, catalyzes the conversion of L-lactate to pyruvate. Is coupled to the respiratory chain. The protein is L-lactate dehydrogenase of Escherichia fergusonii (strain ATCC 35469 / DSM 13698 / CCUG 18766 / IAM 14443 / JCM 21226 / LMG 7866 / NBRC 102419 / NCTC 12128 / CDC 0568-73).